Here is a 380-residue protein sequence, read N- to C-terminus: Alanine racemase (380 aa).

Residue K39 is the Proton acceptor; specific for D-alanine of the active site. K39 carries the N6-(pyridoxal phosphate)lysine modification. A substrate-binding site is contributed by R137. Y263 acts as the Proton acceptor; specific for L-alanine in catalysis. Position 310 (M310) interacts with substrate.

Belongs to the alanine racemase family. Pyridoxal 5'-phosphate serves as cofactor.

The enzyme catalyses L-alanine = D-alanine. The protein operates within amino-acid biosynthesis; D-alanine biosynthesis; D-alanine from L-alanine: step 1/1. In terms of biological role, catalyzes the interconversion of L-alanine and D-alanine. May also act on other amino acids. The sequence is that of Alanine racemase (alr) from Macrococcus caseolyticus (strain JCSC5402) (Macrococcoides caseolyticum).